The chain runs to 97 residues: Putative membrane protein insertion efficiency factor (97 aa).

This sequence belongs to the UPF0161 family.

It is found in the cell inner membrane. In terms of biological role, could be involved in insertion of integral membrane proteins into the membrane. In Chlamydia muridarum (strain MoPn / Nigg), this protein is Putative membrane protein insertion efficiency factor.